A 527-amino-acid polypeptide reads, in one-letter code: Fusicoccadiene C-8 hydroxylase (527 aa).

A helical membrane pass occupies residues G15 to F35. N-linked (GlcNAc...) asparagine glycosylation is present at N125. C465 serves as a coordination point for heme. An N-linked (GlcNAc...) asparagine glycan is attached at N496.

This sequence belongs to the cytochrome P450 family. The cofactor is heme.

It is found in the membrane. Its pathway is mycotoxin biosynthesis. Its function is as follows. Cytochrome P450 monooxygenase; part of the gene cluster that mediates the biosynthesis of the diterpene glucoside brassicicene C. In the first step of the brassicicene C biosynthesis, the bifunctional diterpene synthase bsc8 that possesses both prenyl transferase and terpene cyclase activity, converts isopentenyl diphosphate and dimethylallyl diphosphate into geranylgeranyl diphosphate (GGDP) that is further converted into fusicocca-2,10(14)-diene, the first precursor for brassicicene C. Fusicocca-2,10(14)-diene is then substrate of cytochrome P450 monooxygenase bsc1 for hydroxylation at the C-8 position. Oxidation at C-16 position to aldehyde is then catalyzed by the cytochrome P450 monooyxygenase bsc7, yielding fusicocca-2,10(14)-diene-8-beta,16-diol. Follows the isomerization of the double bond and reduction of aldehyde to alcohol catalyzed by the short-chain dehydrogenase/reductase bsc3 to yield the diol compound fusicocca-1,10(14)-diene-8 beta,16-diol. The next step is the oxidation at the C-3 position of fusicocca-2,10(14)-diene-8-beta,16-diol catalyzed by the alpha-ketoglutarate dependent dioxygenase bsc9, to produce a triol compound. Methylation of the hydroxy group at position 16 is performed by the methyltransferase bsc6. 16-O-methylation is followed by oxidation at the C-13 position to ketone and an alkyl shift of the methyl group leads to brassicicene C. Although the probable acetyltransferase bsc4 is included in the gene cluster, no acetylation reactions are necessary for brassicicene C biosynthesis. However, the fact that brassicicene E, which is a structurally related compound having an acetoxy group at position 12, was previously isolated from another strain of A.brassicicola suggests that the ATCC 96836 strain might also produce a small amount of brassicicene E. This is Fusicoccadiene C-8 hydroxylase from Alternaria brassicicola (Dark leaf spot agent).